The sequence spans 382 residues: Cytochrome b (382 aa).

A run of 4 helical transmembrane segments spans residues 28-48 (YGFL…FLAS), 72-94 (WCFR…LHIL), 107-127 (SWIS…IGYV), and 169-189 (FFVL…IHIF). Heme b contacts are provided by H78 and H92. Residues H173 and H187 each contribute to the heme b site. Residue H192 coordinates a ubiquinone. The next 4 helical transmembrane spans lie at 214–234 (LLSL…LQSI), 274–294 (IPSK…LFLL), 317–337 (VPMI…CQLP), and 340–360 (IFIL…LFAL).

It belongs to the cytochrome b family. In terms of assembly, the main subunits of complex b-c1 are: cytochrome b, cytochrome c1 and the Rieske protein. The cofactor is heme b.

It is found in the mitochondrion inner membrane. Functionally, component of the ubiquinol-cytochrome c reductase complex (complex III or cytochrome b-c1 complex) that is part of the mitochondrial respiratory chain. The b-c1 complex mediates electron transfer from ubiquinol to cytochrome c. Contributes to the generation of a proton gradient across the mitochondrial membrane that is then used for ATP synthesis. This is Cytochrome b (MT-CYB) from Plasmodium vivax (strain Salvador I).